Here is a 152-residue protein sequence, read N- to C-terminus: Endoribonuclease YbeY (152 aa).

The Zn(2+) site is built by histidine 101, histidine 105, and histidine 111. The disordered stretch occupies residues 132–152 (PSSLIERTTKPAKKAAKRKKR). Basic residues predominate over residues 141 to 152 (KPAKKAAKRKKR).

The protein belongs to the endoribonuclease YbeY family. Zn(2+) is required as a cofactor.

The protein localises to the cytoplasm. Single strand-specific metallo-endoribonuclease involved in late-stage 70S ribosome quality control and in maturation of the 3' terminus of the 16S rRNA. The chain is Endoribonuclease YbeY from Koribacter versatilis (strain Ellin345).